The sequence spans 492 residues: Alpha-amylase-related protein (492 aa).

The N-terminal stretch at 1 to 18 is a signal peptide; sequence MRLSLSVLLCLGLALTLA. Q19 bears the Pyrrolidone carboxylic acid mark. A disulfide bridge links C46 with C102. Ca(2+) contacts are provided by N116, Q167, and D176. C155 and C169 form a disulfide bridge. R204 is a chloride binding site. D206 acts as the Nucleophile in catalysis. A Ca(2+)-binding site is contributed by H210. E243 acts as the Proton donor in catalysis. Residues N306 and R341 each contribute to the chloride site. 3 disulfide bridges follow: C374–C380, C416–C439, and C446–C458.

This sequence belongs to the glycosyl hydrolase 13 family. As to quaternary structure, monomer. Ca(2+) is required as a cofactor. The cofactor is chloride.

It is found in the secreted. The catalysed reaction is Endohydrolysis of (1-&gt;4)-alpha-D-glucosidic linkages in polysaccharides containing three or more (1-&gt;4)-alpha-linked D-glucose units.. This is Alpha-amylase-related protein (Amyrel) from Drosophila willistoni (Fruit fly).